A 361-amino-acid polypeptide reads, in one-letter code: WAT1-related protein At4g01450 (361 aa).

Transmembrane regions (helical) follow at residues 8-28, 40-60, 76-96, 103-123, 132-152, 177-197, 209-229, 243-263, 273-293, and 298-318; these read WAPMIVLIVSNMIAGMVNALV, VIATYRLGISTLFLLPVAYFW, LFVSALFGASLMQYFYLLGLS, GSAFWAIMPSLTFVMALIFGF, IGYGVVLGTLISLVGGLLLTM, WIKGCFFLLTGVVLFSSWMLI, YSSTVILSVFGTLQCALLSLI, LTIITVVIAGVVAQGMCTVGM, VVSSSFSPVVLMSATVFDFLI, and IYLGSVIGSVVVVIGLYIFLW. EamA domains lie at 21-142 and 194-317; these read AGMV…GTLI and WMLI…YIFL.

Belongs to the drug/metabolite transporter (DMT) superfamily. Plant drug/metabolite exporter (P-DME) (TC 2.A.7.4) family.

The protein localises to the membrane. This is WAT1-related protein At4g01450 from Arabidopsis thaliana (Mouse-ear cress).